A 62-amino-acid polypeptide reads, in one-letter code: Large ribosomal subunit protein eL24 (62 aa).

4 residues coordinate Zn(2+): Cys-6, Cys-9, Cys-32, and Cys-36. The C4-type zinc-finger motif lies at 6–36 (CSFCGADIPPGYGIMYVRSDGTVQRFCSRKC).

The protein belongs to the eukaryotic ribosomal protein eL24 family. In terms of assembly, part of the 50S ribosomal subunit. Forms a cluster with proteins L3 and L14. Zn(2+) serves as cofactor.

Its function is as follows. Binds to the 23S rRNA. This chain is Large ribosomal subunit protein eL24, found in Pyrobaculum calidifontis (strain DSM 21063 / JCM 11548 / VA1).